Reading from the N-terminus, the 294-residue chain is Undecaprenyl-diphosphatase (294 aa).

The next 9 membrane-spanning stretches (helical) occupy residues 2-22, 27-47, 65-85, 110-130, 135-155, 172-192, 215-235, 239-259, and 272-292; these read SMIY…SLIL, LVFS…PISS, VIAF…KIFW, LCIR…MIFY, LIFE…FLLV, ITYL…WPGF, FSFF…LYHY, IGLM…FIAL, and VSLI…YWGL.

This sequence belongs to the UppP family.

The protein resides in the cell inner membrane. It carries out the reaction di-trans,octa-cis-undecaprenyl diphosphate + H2O = di-trans,octa-cis-undecaprenyl phosphate + phosphate + H(+). Its function is as follows. Catalyzes the dephosphorylation of undecaprenyl diphosphate (UPP). Confers resistance to bacitracin. This Blochmanniella pennsylvanica (strain BPEN) protein is Undecaprenyl-diphosphatase.